We begin with the raw amino-acid sequence, 151 residues long: Deoxyuridine 5'-triphosphate nucleotidohydrolase (151 aa).

Substrate contacts are provided by residues 70-72 (RSG), asparagine 83, 87-89 (LID), and methionine 97.

The protein belongs to the dUTPase family. Mg(2+) is required as a cofactor.

It carries out the reaction dUTP + H2O = dUMP + diphosphate + H(+). It participates in pyrimidine metabolism; dUMP biosynthesis; dUMP from dCTP (dUTP route): step 2/2. In terms of biological role, this enzyme is involved in nucleotide metabolism: it produces dUMP, the immediate precursor of thymidine nucleotides and it decreases the intracellular concentration of dUTP so that uracil cannot be incorporated into DNA. This is Deoxyuridine 5'-triphosphate nucleotidohydrolase from Pasteurella multocida (strain Pm70).